The following is a 293-amino-acid chain: Ribosomal protein L11 methyltransferase (293 aa).

4 residues coordinate S-adenosyl-L-methionine: Thr145, Gly166, Asp188, and Asn230.

This sequence belongs to the methyltransferase superfamily. PrmA family.

It is found in the cytoplasm. The enzyme catalyses L-lysyl-[protein] + 3 S-adenosyl-L-methionine = N(6),N(6),N(6)-trimethyl-L-lysyl-[protein] + 3 S-adenosyl-L-homocysteine + 3 H(+). Its function is as follows. Methylates ribosomal protein L11. The protein is Ribosomal protein L11 methyltransferase of Shewanella frigidimarina (strain NCIMB 400).